Consider the following 476-residue polypeptide: ATP synthase subunit beta, chloroplastic (476 aa).

An ATP-binding site is contributed by 153-160 (GGAGVGKT).

It belongs to the ATPase alpha/beta chains family. In terms of assembly, F-type ATPases have 2 components, CF(1) - the catalytic core - and CF(0) - the membrane proton channel. CF(1) has five subunits: alpha(3), beta(3), gamma(1), delta(1), epsilon(1). CF(0) has four main subunits: a(1), b(1), b'(1) and c(9-12).

It localises to the plastid. It is found in the chloroplast thylakoid membrane. The enzyme catalyses ATP + H2O + 4 H(+)(in) = ADP + phosphate + 5 H(+)(out). Its function is as follows. Produces ATP from ADP in the presence of a proton gradient across the membrane. The catalytic sites are hosted primarily by the beta subunits. This is ATP synthase subunit beta, chloroplastic from Dicksonia antarctica (Australian tree fern).